The following is a 475-amino-acid chain: UDP-glycosyltransferase 84A4 (475 aa).

The Proton acceptor role is filled by histidine 20. Histidine 20 contacts an anthocyanidin. Positions 342, 357, 360, 361, 362, and 365 each coordinate UDP-alpha-D-glucose. Glycine 380 provides a ligand contact to an anthocyanidin. UDP-alpha-D-glucose-binding residues include aspartate 381 and glutamine 382.

It belongs to the UDP-glycosyltransferase family.

It catalyses the reaction (E)-4-coumarate + UDP-alpha-D-glucose = 4-O-(beta-D-glucosyl)-trans-4-coumarate + UDP + H(+). The enzyme catalyses (E)-ferulate + UDP-alpha-D-glucose = 1-O-[(E)-feruloyl]-beta-D-glucose + UDP. The catalysed reaction is (E)-caffeate + UDP-alpha-D-glucose = 1-O-[(E)-caffeoyl]-beta-D-glucose + UDP. It carries out the reaction (E)-sinapate + UDP-alpha-D-glucose = 1-O-(trans-sinapoyl)-beta-D-glucose + UDP. It catalyses the reaction (E)-cinnamate + UDP-alpha-D-glucose = 1-O-(trans-cinnamoyl)-beta-D-glucose + UDP. Its function is as follows. UDP-glucosyltransferase that forms glucose esters with phenylpropanoids. Glucosylates 4-coumarate, ferulate, caffeate, sinapate and cinnamate. The chain is UDP-glycosyltransferase 84A4 from Arabidopsis thaliana (Mouse-ear cress).